The sequence spans 347 residues: Serpentine receptor class beta-2 (347 aa).

The next 7 membrane-spanning stretches (helical) occupy residues 27–47, 62–82, 108–128, 146–166, 194–214, 246–266, and 288–308; these read IAQLWTFVVSILAIPALYIFL, FLLVCYFSASFVFAVLLAFLF, GNLSLTLFMTIQMIMPLGFSI, FLGPLLVFTLIGIDLALLYHV, FWELLYAEIGNFICNCIFLLV, LIVSFTHLLFVGWYLIATIFV, and ITVPTYNLTIVFVGIKALSFM.

It belongs to the nematode receptor-like protein srb family.

The protein resides in the membrane. The polypeptide is Serpentine receptor class beta-2 (srb-2) (Caenorhabditis elegans).